A 214-amino-acid polypeptide reads, in one-letter code: Heat shock protein 30 (214 aa).

In terms of domain architecture, sHSP spans 66 to 183 (VPSSLTIQPV…AERVVPINCS (118 aa)). A disordered region spans residues 193–214 (SKTEGSITDTQKKQENTISKED). Over residues 202–214 (TQKKQENTISKED) the composition is skewed to basic and acidic residues.

Belongs to the small heat shock protein (HSP20) family.

The protein is Heat shock protein 30 (hsp30) of Oncorhynchus tshawytscha (Chinook salmon).